The chain runs to 220 residues: Vesicle-associated membrane protein 7 (220 aa).

Ala-2 carries the post-translational modification N-acetylalanine. The Cytoplasmic portion of the chain corresponds to 2 to 188 (AILFAVVARG…ARAMCMKNLK (187 aa)). Positions 7 to 110 (VVARGTTILA…AMNSEFSSVL (104 aa)) constitute a Longin domain. The region spanning 125 to 185 (KVMETQAQVD…RNLARAMCMK (61 aa)) is the v-SNARE coiled-coil homology domain. Residues Ser-167 and Ser-168 each carry the phosphoserine modification. The helical; Anchor for type IV membrane protein transmembrane segment at 189–209 (LTIIIIIISVVFIYIIVSPLC) threads the bilayer. The Vesicular portion of the chain corresponds to 210 to 220 (GGFTWPNCVKK).

It belongs to the synaptobrevin family. In terms of assembly, component of the SNARE complex composed of STX4, SNAP23 and VAMP7 that binds SYT7 during lysosomal exocytosis. Component of the SNARE complex composed of STX7, STX8, VAMP7 and VTI1B that is required for heterotypic fusion of late endosomes with lysosomes. May interact with STX17. Interacts with PICALM. Interacts with RAB21.

It is found in the cytoplasmic vesicle. The protein localises to the secretory vesicle membrane. It localises to the golgi apparatus. Its subcellular location is the trans-Golgi network membrane. The protein resides in the late endosome membrane. It is found in the lysosome membrane. The protein localises to the endoplasmic reticulum membrane. It localises to the phagosome membrane. Its subcellular location is the synapse. The protein resides in the synaptosome. Its function is as follows. Involved in the targeting and/or fusion of transport vesicles to their target membrane during transport of proteins from the early endosome to the lysosome. Required for heterotypic fusion of late endosomes with lysosomes and homotypic lysosomal fusion. Required for calcium regulated lysosomal exocytosis. Involved in the export of chylomicrons from the endoplasmic reticulum to the cis Golgi. Required for exocytosis of mediators during eosinophil and neutrophil degranulation, and target cell killing by natural killer cells. Required for focal exocytosis of late endocytic vesicles during phagosome formation. The polypeptide is Vesicle-associated membrane protein 7 (VAMP7) (Bos taurus (Bovine)).